The sequence spans 289 residues: Glyceraldehyde-3-phosphate dehydrogenase (289 aa).

NAD(+)-binding residues include Asp12 and Arg57. D-glyceraldehyde 3-phosphate is bound by residues 128 to 130, Thr159, 188 to 189, and Arg211; these read SCT and TG. Cys129 serves as the catalytic Nucleophile.

Belongs to the glyceraldehyde-3-phosphate dehydrogenase family. As to quaternary structure, homotetramer.

It localises to the cytoplasm. It catalyses the reaction D-glyceraldehyde 3-phosphate + phosphate + NAD(+) = (2R)-3-phospho-glyceroyl phosphate + NADH + H(+). It participates in carbohydrate degradation; glycolysis; pyruvate from D-glyceraldehyde 3-phosphate: step 1/5. The polypeptide is Glyceraldehyde-3-phosphate dehydrogenase (GPD) (Amanita muscaria (Fly agaric)).